A 148-amino-acid polypeptide reads, in one-letter code: Hydrogenase expression/formation protein HoxO (148 aa).

Positions 128 to 148 are disordered; it reads IPVLSPESGTPSCSPMETSES. Over residues 134–148 the composition is skewed to polar residues; the sequence is ESGTPSCSPMETSES.

Belongs to the HupG/HyaE family.

The protein is Hydrogenase expression/formation protein HoxO (hoxO) of Azotobacter vinelandii.